A 62-amino-acid polypeptide reads, in one-letter code: Small ribosomal subunit protein bS21 (62 aa).

The segment covering Lys-40–Ala-52 has biased composition (basic and acidic residues). A disordered region spans residues Lys-40–Tyr-62. Basic residues predominate over residues Arg-53–Tyr-62.

This sequence belongs to the bacterial ribosomal protein bS21 family.

This Limosilactobacillus fermentum (strain NBRC 3956 / LMG 18251) (Lactobacillus fermentum) protein is Small ribosomal subunit protein bS21.